We begin with the raw amino-acid sequence, 226 residues long: NifU-like protein 1, chloroplastic (226 aa).

A chloroplast-targeting transit peptide spans Met-1–Thr-76.

This sequence belongs to the NifU family. In terms of assembly, homodimer; disulfide-linked.

Its subcellular location is the plastid. It is found in the chloroplast stroma. Molecular scaffold for [Fe-S] cluster assembly of chloroplastic iron-sulfur proteins. The chain is NifU-like protein 1, chloroplastic (NIFU1) from Oryza sativa subsp. japonica (Rice).